The sequence spans 861 residues: Bifunctional uridylyltransferase/uridylyl-removing enzyme (861 aa).

The segment at 1-321 (MKNDNRIIKN…VYHQKQKIIR (321 aa)) is uridylyltransferase. Residues 322-678 (LDDEFQLSNR…IMPHHSQGGT (357 aa)) form a uridylyl-removing region. Residues 440–562 (VDQHTLFVIR…LPHARYLDYL (123 aa)) enclose the HD domain. 2 consecutive ACT domains span residues 679-760 (EVFI…AVSR) and 788-861 (QLFL…KSKY).

This sequence belongs to the GlnD family. Mg(2+) is required as a cofactor.

It carries out the reaction [protein-PII]-L-tyrosine + UTP = [protein-PII]-uridylyl-L-tyrosine + diphosphate. The catalysed reaction is [protein-PII]-uridylyl-L-tyrosine + H2O = [protein-PII]-L-tyrosine + UMP + H(+). Its activity is regulated as follows. Uridylyltransferase (UTase) activity is inhibited by glutamine, while glutamine activates uridylyl-removing (UR) activity. Functionally, modifies, by uridylylation and deuridylylation, the PII regulatory proteins (GlnB and homologs), in response to the nitrogen status of the cell that GlnD senses through the glutamine level. Under low glutamine levels, catalyzes the conversion of the PII proteins and UTP to PII-UMP and PPi, while under higher glutamine levels, GlnD hydrolyzes PII-UMP to PII and UMP (deuridylylation). Thus, controls uridylylation state and activity of the PII proteins, and plays an important role in the regulation of nitrogen assimilation and metabolism. The sequence is that of Bifunctional uridylyltransferase/uridylyl-removing enzyme from Legionella pneumophila (strain Corby).